A 127-amino-acid polypeptide reads, in one-letter code: Thioredoxin domain-containing protein 8 (127 aa).

Residues 2 to 127 (VQKIKSMREF…KLEEKIQELM (126 aa)) enclose the Thioredoxin domain. C32 and C35 are joined by a disulfide.

It belongs to the thioredoxin family. Testis-specific. Expressed in spermatozoa, sperm tail, elongated and round spermatids.

It is found in the cytoplasm. It localises to the golgi apparatus. May be required for post-translational modifications of proteins required for acrosomal biogenesis. May act by reducing disulfide bonds within the sperm. The polypeptide is Thioredoxin domain-containing protein 8 (Txndc8) (Rattus norvegicus (Rat)).